We begin with the raw amino-acid sequence, 438 residues long: Xylose isomerase (438 aa).

Active-site residues include His-102 and Asp-105. Mg(2+) contacts are provided by Glu-233, Glu-269, His-272, Asp-297, Asp-308, Asp-310, and Asp-340.

It belongs to the xylose isomerase family. Homotetramer. The cofactor is Mg(2+).

Its subcellular location is the cytoplasm. The catalysed reaction is alpha-D-xylose = alpha-D-xylulofuranose. The sequence is that of Xylose isomerase from Solibacter usitatus (strain Ellin6076).